Reading from the N-terminus, the 127-residue chain is Glycine cleavage system H protein (127 aa).

Residues 24-105 (TALVGITDFA…YNEGWIVKMK (82 aa)) enclose the Lipoyl-binding domain. An N6-lipoyllysine modification is found at K65.

This sequence belongs to the GcvH family. In terms of assembly, the glycine cleavage system is composed of four proteins: P, T, L and H. (R)-lipoate is required as a cofactor.

In terms of biological role, the glycine cleavage system catalyzes the degradation of glycine. The H protein shuttles the methylamine group of glycine from the P protein to the T protein. The sequence is that of Glycine cleavage system H protein from Chlorobaculum tepidum (strain ATCC 49652 / DSM 12025 / NBRC 103806 / TLS) (Chlorobium tepidum).